Reading from the N-terminus, the 386-residue chain is Protein phosphatase methylesterase 1 (386 aa).

A disordered region spans residues 1 to 38; that stretch reads MSALEKSMHLGRLPSRPPLPGSGGSQSGAKMRMGPGRK. Residue Ser-15 is modified to Phosphoserine. Asymmetric dimethylarginine; alternate is present on Arg-16. Arg-16 bears the Omega-N-methylarginine; alternate mark. Active-site residues include Ser-156 and Asp-181. A compositionally biased stretch (acidic residues) spans 255–265; that stretch reads IEEEEEDEEGS. The interval 255 to 280 is disordered; it reads IEEEEEDEEGSESVNKRKKEDDMETK. A compositionally biased stretch (basic and acidic residues) spans 268-280; it reads VNKRKKEDDMETK. His-349 is a catalytic residue.

It belongs to the AB hydrolase superfamily. In terms of assembly, binds PPP2CA and PPP2CB. Phosphorylated by SIK1 following increases in intracellular sodium, leading to dissociation from the protein phosphatase 2A (PP2A) complex and subsequent dephosphorylation of sodium/potassium-transporting ATPase ATP1A1. In terms of tissue distribution, ubiquitous. Highly expressed in testis and brain.

The enzyme catalyses [phosphatase 2A protein]-C-terminal L-leucine methyl ester + H2O = [phosphatase 2A protein]-C-terminal L-leucine + methanol + H(+). In terms of biological role, demethylates proteins that have been reversibly carboxymethylated. Demethylates PPP2CB (in vitro) and PPP2CA. Binding to PPP2CA displaces the manganese ion and inactivates the enzyme. In Mus musculus (Mouse), this protein is Protein phosphatase methylesterase 1 (Ppme1).